The chain runs to 96 residues: Dynein light chain roadblock-type 2 (96 aa).

Ala-2 is modified (N-acetylalanine).

It belongs to the GAMAD family. As to quaternary structure, homodimer. The cytoplasmic dynein 1 complex consists of two catalytic heavy chains (HCs) and a number of non-catalytic subunits presented by intermediate chains (ICs), light intermediate chains (LICs) and light chains (LCs); the composition seems to vary in respect to the IC, LIC and LC composition. The heavy chain homodimer serves as a scaffold for the probable homodimeric assembly of the respective non-catalytic subunits. The ICs and LICs bind directly to the HC dimer and the LCs assemble on the IC dimer. Interacts with DYNC1I1 and DYNC1I2. Self-associates. Interacts with DYNLRB1.

The protein localises to the cytoplasm. It is found in the cytoskeleton. Its function is as follows. Acts as one of several non-catalytic accessory components of the cytoplasmic dynein 1 complex that are thought to be involved in linking dynein to cargos and to adapter proteins that regulate dynein function. Cytoplasmic dynein 1 acts as a motor for the intracellular retrograde motility of vesicles and organelles along microtubules. The polypeptide is Dynein light chain roadblock-type 2 (DYNLRB2) (Bos taurus (Bovine)).